The following is a 443-amino-acid chain: Glutamine synthetase (443 aa).

Positions 16-101 constitute a GS beta-grasp domain; the sequence is NGVKFIRLQF…LICDVYKPDG (86 aa). In terms of domain architecture, GS catalytic spans 108-443; sequence PRHVLKRANA…WELENYLNKY (336 aa). Positions 131 and 133 each coordinate Mg(2+). Glu-183 lines the ATP pocket. Glu-188 and Glu-195 together coordinate Mg(2+). L-glutamate-binding positions include 239–240 and Gly-240; that span reads NG. His-244 provides a ligand contact to Mg(2+). Ser-248 is an ATP binding site. Residues Arg-297, Glu-303, and Arg-315 each contribute to the L-glutamate site. Residues Arg-315 and Arg-320 each coordinate ATP. Glu-332 serves as a coordination point for Mg(2+). Arg-334 contributes to the L-glutamate binding site.

Belongs to the glutamine synthetase family. In terms of assembly, oligomer of 12 subunits arranged in the form of two hexagons. In its feedback-inhibited form, interacts with TnrA in order to block its DNA-binding activity. The cofactor is Mg(2+).

Its subcellular location is the cytoplasm. The enzyme catalyses L-glutamate + NH4(+) + ATP = L-glutamine + ADP + phosphate + H(+). With respect to regulation, inhibited by glutamine. In terms of biological role, glutamine synthetase (GS) is an unusual multitasking protein that functions as an enzyme, a transcription coregulator, and a chaperone in ammonium assimilation and in the regulation of genes involved in nitrogen metabolism. It catalyzes the ATP-dependent biosynthesis of glutamine from glutamate and ammonia. Feedback-inhibited GlnA also interacts with and regulates the activity of the transcriptional regulator TnrA. During nitrogen limitation, TnrA is in its DNA-binding active state and turns on the transcription of genes required for nitrogen assimilation. Under conditions of nitrogen excess, feedback-inhibited GlnA forms a stable complex with TnrA, which inhibits its DNA-binding activity. In contrast, feedback-inhibited GlnA acts as a chaperone to stabilize the DNA-binding activity of GlnR, which represses the transcription of nitrogen assimilation genes. This chain is Glutamine synthetase, found in Clostridium saccharobutylicum.